The sequence spans 955 residues: Kinesin-like protein K39 (955 aa).

Residues 12–392 (RVKVSVRVRP…LRYASRARDI (381 aa)) form the Kinesin motor domain. 122–129 (GQTGSGKT) contributes to the ATP binding site. The stretch at 426 to 955 (PAYVSELKKK…EERAAELASQ (530 aa)) forms a coiled coil. 2 disordered regions span residues 682-712 (ELDA…RESE) and 725-955 (TAAA…LASQ). A run of 7 repeats spans residues 704–742 (LEQQ…TRAT), 743–781 (LEQQ…TRAT), 782–820 (LEQQ…TRAT), 821–859 (LEQQ…TRAT), 860–898 (LEQQ…TRAT), 899–937 (LEQQ…TRAA), and 938–955 (LEQQ…LASQ). Residues 704–955 (LEQQLRESEE…EERAAELASQ (252 aa)) form a 7 X 39 AA approximate tandem repeats region. Basic and acidic residues-rich tracts occupy residues 785 to 794 (QLRDSEERAA), 824 to 833 (QLRDSEERAA), 863 to 872 (QLRESEERAA), 902 to 911 (QLRDSEERAA), and 941 to 955 (QLRD…LASQ).

This sequence belongs to the TRAFAC class myosin-kinesin ATPase superfamily. Kinesin family.

Its subcellular location is the cytoplasm. The protein localises to the cytoskeleton. The sequence is that of Kinesin-like protein K39 (KIN) from Leishmania chagasi.